We begin with the raw amino-acid sequence, 895 residues long: Endochitinase 2 (895 aa).

The N-terminal stretch at 1–22 (MGLTNILAAFIAVSSLFIQSLA) is a signal peptide. Positions 29-340 (SNLAVYWGQG…DIMKEVLLRC (312 aa)) constitute a GH18 domain. Asn90 is a glycosylation site (N-linked (GlcNAc...) asparagine). Glu175 (proton donor) is an active-site residue. The tract at residues 343–712 (DPPTSTVTST…APSSSTTEDR (370 aa)) is disordered. Over residues 346–425 (TSTVTSTISA…ISTRSASTET (80 aa)) the composition is skewed to low complexity. Residues 426-478 (VTTRSQEPPSTTISTRPASTETVTTRSQEPPSSTISTRSASTETVTTRSQEPP) are compositionally biased toward polar residues. Low complexity predominate over residues 479-505 (SSTISTRSASTETSTSSQDSPSTTIST). Residues 506–543 (KSAPTGTVTTRSQDLPSTTISTRSPETETETVTTKSQD) show a composition bias toward polar residues. Residues 544–555 (SPSITLSTRSSS) show a composition bias toward low complexity. Residues 556–577 (AETVSTRSQHSSSTTISTKSAP) are compositionally biased toward polar residues. Residues 578–589 (TETGTTSEHSTS) are compositionally biased toward low complexity. Polar residues predominate over residues 590 to 657 (MPVSTRSAST…ISTELPSQTH (68 aa)). Composition is skewed to low complexity over residues 658–692 (STTDSTPVSSSPTIPSGSTTIIPGTASDPVSAPTT) and 699–712 (TLTLAPSSSTTEDR). Gly866 carries the GPI-anchor amidated glycine lipid modification. The propeptide at 867-895 (GAMTVRSMDVVAKALITAGAAVLGLFLGL) is removed in mature form.

Belongs to the glycosyl hydrolase 18 family. Chitinase class III subfamily.

Its subcellular location is the cell membrane. It catalyses the reaction Random endo-hydrolysis of N-acetyl-beta-D-glucosaminide (1-&gt;4)-beta-linkages in chitin and chitodextrins.. Functionally, may be associated with endosporulation. In Coccidioides immitis (strain RS) (Valley fever fungus), this protein is Endochitinase 2 (CTS2).